The following is a 207-amino-acid chain: 2,3-bisphosphoglycerate-dependent phosphoglycerate mutase (207 aa).

Substrate contacts are provided by residues 10–17, 23–24, Arg62, 89–92, Lys100, 116–117, and 160–161; these read RHGQSEWN, TG, ERDY, RR, and GN. Catalysis depends on His11, which acts as the Tele-phosphohistidine intermediate. Glu89 serves as the catalytic Proton donor/acceptor.

This sequence belongs to the phosphoglycerate mutase family. BPG-dependent PGAM subfamily. In terms of assembly, homodimer.

It carries out the reaction (2R)-2-phosphoglycerate = (2R)-3-phosphoglycerate. It participates in carbohydrate degradation; glycolysis; pyruvate from D-glyceraldehyde 3-phosphate: step 3/5. Functionally, catalyzes the interconversion of 2-phosphoglycerate and 3-phosphoglycerate. In Nitrobacter hamburgensis (strain DSM 10229 / NCIMB 13809 / X14), this protein is 2,3-bisphosphoglycerate-dependent phosphoglycerate mutase.